The primary structure comprises 160 residues: Cytochrome b6-f complex subunit 4 (160 aa).

A run of 3 helical transmembrane segments spans residues 36 to 56 (LLYM…GLAV), 95 to 115 (LLGV…PFIE), and 131 to 151 (TVFL…CLPI).

This sequence belongs to the cytochrome b family. PetD subfamily. As to quaternary structure, the 4 large subunits of the cytochrome b6-f complex are cytochrome b6, subunit IV (17 kDa polypeptide, petD), cytochrome f and the Rieske protein, while the 4 small subunits are petG, petL, petM and petN. The complex functions as a dimer.

Its subcellular location is the plastid. The protein localises to the chloroplast thylakoid membrane. Functionally, component of the cytochrome b6-f complex, which mediates electron transfer between photosystem II (PSII) and photosystem I (PSI), cyclic electron flow around PSI, and state transitions. The polypeptide is Cytochrome b6-f complex subunit 4 (Tupiella akineta (Green alga)).